The chain runs to 843 residues: Probable cleavage and polyadenylation specificity factor subunit 2 (843 aa).

The segment covering A414 to R425 has biased composition (basic and acidic residues). Disordered regions lie at residues A414–A443 and D691–K753. The segment covering E432–I441 has biased composition (acidic residues). Residues S732–T746 are compositionally biased toward basic and acidic residues.

It belongs to the metallo-beta-lactamase superfamily. RNA-metabolizing metallo-beta-lactamase-like family. CPSF2/YSH1 subfamily. In terms of assembly, CPSF is a heterotetramer composed of four distinct subunits 160, 100, 70 and 30 kDa.

It is found in the nucleus. In terms of biological role, CPSF plays a key role in pre-mRNA 3'-end formation, recognizing the AAUAAA signal sequence and interacting with poly(A)polymerase and other factors to bring about cleavage and poly(A) addition. In Caenorhabditis elegans, this protein is Probable cleavage and polyadenylation specificity factor subunit 2 (cpsf-2).